The following is a 765-amino-acid chain: Periplasmic beta-glucosidase (765 aa).

Residues M1–A20 form the signal peptide. D287 is an active-site residue.

It belongs to the glycosyl hydrolase 3 family.

The protein localises to the periplasm. The enzyme catalyses Hydrolysis of terminal, non-reducing beta-D-glucosyl residues with release of beta-D-glucose.. This Escherichia coli (strain K12) protein is Periplasmic beta-glucosidase (bglX).